Here is a 180-residue protein sequence, read N- to C-terminus: Large ribosomal subunit protein uL5 (180 aa).

The protein belongs to the universal ribosomal protein uL5 family. Part of the 50S ribosomal subunit; part of the 5S rRNA/L5/L18/L25 subcomplex. Contacts the 5S rRNA and the P site tRNA. Forms a bridge to the 30S subunit in the 70S ribosome.

In terms of biological role, this is one of the proteins that bind and probably mediate the attachment of the 5S RNA into the large ribosomal subunit, where it forms part of the central protuberance. In the 70S ribosome it contacts protein S13 of the 30S subunit (bridge B1b), connecting the 2 subunits; this bridge is implicated in subunit movement. Contacts the P site tRNA; the 5S rRNA and some of its associated proteins might help stabilize positioning of ribosome-bound tRNAs. This Streptococcus thermophilus (strain ATCC BAA-491 / LMD-9) protein is Large ribosomal subunit protein uL5.